Here is a 452-residue protein sequence, read N- to C-terminus: Bifunctional protein GlmU (452 aa).

Positions 1 to 232 (MTTRTSLTIV…EDEVRGINTK (232 aa)) are pyrophosphorylase. UDP-N-acetyl-alpha-D-glucosamine-binding positions include 11 to 14 (LAAG), K25, Q78, and 83 to 84 (GT). D108 contributes to the Mg(2+) binding site. G144, E158, N173, and N230 together coordinate UDP-N-acetyl-alpha-D-glucosamine. N230 lines the Mg(2+) pocket. Positions 233–253 (AQLAEAEAVMQTRLRQAAMTA) are linker. Positions 254–452 (GVTLISPETI…SARARKPKTS (199 aa)) are N-acetyltransferase. The UDP-N-acetyl-alpha-D-glucosamine site is built by R319 and K337. H349 serves as the catalytic Proton acceptor. UDP-N-acetyl-alpha-D-glucosamine contacts are provided by Y352 and N363. Residues A366, 372 to 373 (NY), S391, S409, and R426 contribute to the acetyl-CoA site.

It in the N-terminal section; belongs to the N-acetylglucosamine-1-phosphate uridyltransferase family. In the C-terminal section; belongs to the transferase hexapeptide repeat family. In terms of assembly, homotrimer. It depends on Mg(2+) as a cofactor.

The protein resides in the cytoplasm. The catalysed reaction is alpha-D-glucosamine 1-phosphate + acetyl-CoA = N-acetyl-alpha-D-glucosamine 1-phosphate + CoA + H(+). It carries out the reaction N-acetyl-alpha-D-glucosamine 1-phosphate + UTP + H(+) = UDP-N-acetyl-alpha-D-glucosamine + diphosphate. Its pathway is nucleotide-sugar biosynthesis; UDP-N-acetyl-alpha-D-glucosamine biosynthesis; N-acetyl-alpha-D-glucosamine 1-phosphate from alpha-D-glucosamine 6-phosphate (route II): step 2/2. The protein operates within nucleotide-sugar biosynthesis; UDP-N-acetyl-alpha-D-glucosamine biosynthesis; UDP-N-acetyl-alpha-D-glucosamine from N-acetyl-alpha-D-glucosamine 1-phosphate: step 1/1. It participates in bacterial outer membrane biogenesis; LPS lipid A biosynthesis. Functionally, catalyzes the last two sequential reactions in the de novo biosynthetic pathway for UDP-N-acetylglucosamine (UDP-GlcNAc). The C-terminal domain catalyzes the transfer of acetyl group from acetyl coenzyme A to glucosamine-1-phosphate (GlcN-1-P) to produce N-acetylglucosamine-1-phosphate (GlcNAc-1-P), which is converted into UDP-GlcNAc by the transfer of uridine 5-monophosphate (from uridine 5-triphosphate), a reaction catalyzed by the N-terminal domain. This Rhodopseudomonas palustris (strain BisB5) protein is Bifunctional protein GlmU.